The following is a 355-amino-acid chain: Uroporphyrinogen decarboxylase (355 aa).

Substrate-binding positions include 27-31, D77, Y154, T209, and H328; that span reads RQAGR.

The protein belongs to the uroporphyrinogen decarboxylase family. As to quaternary structure, homodimer.

The protein localises to the cytoplasm. It catalyses the reaction uroporphyrinogen III + 4 H(+) = coproporphyrinogen III + 4 CO2. It functions in the pathway porphyrin-containing compound metabolism; protoporphyrin-IX biosynthesis; coproporphyrinogen-III from 5-aminolevulinate: step 4/4. Functionally, catalyzes the decarboxylation of four acetate groups of uroporphyrinogen-III to yield coproporphyrinogen-III. The chain is Uroporphyrinogen decarboxylase from Dechloromonas aromatica (strain RCB).